Reading from the N-terminus, the 1076-residue chain is DNA-directed RNA polymerase subunit beta (1076 aa).

This sequence belongs to the RNA polymerase beta chain family. As to quaternary structure, in plastids the minimal PEP RNA polymerase catalytic core is composed of four subunits: alpha, beta, beta', and beta''. When a (nuclear-encoded) sigma factor is associated with the core the holoenzyme is formed, which can initiate transcription.

It is found in the plastid. The enzyme catalyses RNA(n) + a ribonucleoside 5'-triphosphate = RNA(n+1) + diphosphate. DNA-dependent RNA polymerase catalyzes the transcription of DNA into RNA using the four ribonucleoside triphosphates as substrates. This chain is DNA-directed RNA polymerase subunit beta, found in Euglena longa (Euglenophycean alga).